The chain runs to 215 residues: S-crystallin 2 (215 aa).

In terms of domain architecture, GST N-terminal spans 2 to 80 (PSYTLNYFNH…YLAREFGFHG (79 aa)). A GST C-terminal domain is found at 82–215 (NNMEMARVEY…YLKKRSSTEF (134 aa)).

Belongs to the GST superfamily. As to expression, lens.

Its function is as follows. S-crystallins are structural components of squids and octopi eye lens. Contains relatively little if any GST activity. This is S-crystallin 2 from Enteroctopus dofleini (North Pacific giant octopus).